Consider the following 100-residue polypeptide: Small ribosomal subunit protein uS14m (100 aa).

This sequence belongs to the universal ribosomal protein uS14 family.

Its subcellular location is the mitochondrion. This Brassica napus (Rape) protein is Small ribosomal subunit protein uS14m (RPS14).